A 578-amino-acid polypeptide reads, in one-letter code: Sulfite reductase [NADPH] hemoprotein beta-component (578 aa).

The segment covering 1 to 11 (MSANQQSNSQE) has biased composition (polar residues). Positions 1–20 (MSANQQSNSQEVLGEVLGPL) are disordered. Cys-441, Cys-447, Cys-487, and Cys-491 together coordinate [4Fe-4S] cluster. A siroheme-binding site is contributed by Cys-491.

It belongs to the nitrite and sulfite reductase 4Fe-4S domain family. In terms of assembly, alpha(8)-beta(8). The alpha component is a flavoprotein, the beta component is a hemoprotein. It depends on siroheme as a cofactor. [4Fe-4S] cluster is required as a cofactor.

It catalyses the reaction hydrogen sulfide + 3 NADP(+) + 3 H2O = sulfite + 3 NADPH + 4 H(+). It functions in the pathway sulfur metabolism; hydrogen sulfide biosynthesis; hydrogen sulfide from sulfite (NADPH route): step 1/1. In terms of biological role, component of the sulfite reductase complex that catalyzes the 6-electron reduction of sulfite to sulfide. This is one of several activities required for the biosynthesis of L-cysteine from sulfate. This is Sulfite reductase [NADPH] hemoprotein beta-component from Vibrio campbellii (strain ATCC BAA-1116).